A 167-amino-acid polypeptide reads, in one-letter code: Zymogen granule membrane protein 16 (167 aa).

Residues 1–16 form the signal peptide; that stretch reads MLAVALLVLLCASASA. One can recognise a Jacalin-type lectin domain in the interval 24-159; sequence SSYSGEYGGK…IDSISLHWDT (136 aa).

The protein belongs to the jacalin lectin family.

The protein localises to the secreted. It is found in the extracellular space. The protein resides in the extracellular matrix. Its subcellular location is the zymogen granule lumen. It localises to the golgi apparatus lumen. May play a role in protein trafficking. May act as a linker molecule between the submembranous matrix on the luminal side of zymogen granule membrane (ZGM) and aggregated secretory proteins during granule formation in the TGN. This Mus musculus (Mouse) protein is Zymogen granule membrane protein 16 (Zg16).